Here is a 303-residue protein sequence, read N- to C-terminus: Quinolinate synthase (303 aa).

His-25 and Ser-42 together coordinate iminosuccinate. Cys-87 provides a ligand contact to [4Fe-4S] cluster. Iminosuccinate-binding positions include 113–115 (YVN) and Ser-130. Cys-174 contacts [4Fe-4S] cluster. Residues 200 to 202 (HPE) and Thr-217 contribute to the iminosuccinate site. Cys-260 serves as a coordination point for [4Fe-4S] cluster.

It belongs to the quinolinate synthase family. Type 2 subfamily. As to quaternary structure, homodimer. [4Fe-4S] cluster serves as cofactor.

It is found in the cytoplasm. It carries out the reaction iminosuccinate + dihydroxyacetone phosphate = quinolinate + phosphate + 2 H2O + H(+). Its pathway is cofactor biosynthesis; NAD(+) biosynthesis; quinolinate from iminoaspartate: step 1/1. Functionally, catalyzes the condensation of iminoaspartate with dihydroxyacetone phosphate to form quinolinate. The polypeptide is Quinolinate synthase (Pyrococcus furiosus (strain ATCC 43587 / DSM 3638 / JCM 8422 / Vc1)).